Consider the following 314-residue polypeptide: Protoheme IX farnesyltransferase (314 aa).

The next 8 helical transmembrane spans lie at 30-50 (VMSL…VSVH), 51-71 (PVIG…SGAL), 122-142 (FLAA…YSMW), 151-171 (IVIG…IATG), 178-198 (WLMF…LALF), 224-244 (IIAY…SAIG), 247-267 (VYLA…IDIW), and 285-305 (FFRL…LESA).

It belongs to the UbiA prenyltransferase family. Protoheme IX farnesyltransferase subfamily. As to quaternary structure, interacts with CtaA.

Its subcellular location is the cell inner membrane. It catalyses the reaction heme b + (2E,6E)-farnesyl diphosphate + H2O = Fe(II)-heme o + diphosphate. Its pathway is porphyrin-containing compound metabolism; heme O biosynthesis; heme O from protoheme: step 1/1. In terms of biological role, converts heme B (protoheme IX) to heme O by substitution of the vinyl group on carbon 2 of heme B porphyrin ring with a hydroxyethyl farnesyl side group. The polypeptide is Protoheme IX farnesyltransferase (Roseobacter denitrificans (strain ATCC 33942 / OCh 114) (Erythrobacter sp. (strain OCh 114))).